A 404-amino-acid polypeptide reads, in one-letter code: Queuine tRNA-ribosyltransferase catalytic subunit (404 aa).

D98 acts as the Proton acceptor in catalysis. Substrate contacts are provided by residues 98–102, D152, Q195, and G222; that span reads DSGGF. The segment at 253 to 259 is RNA binding; it reads GVGYAED. Residue D272 is the Nucleophile of the active site. The RNA binding; important for wobble base 34 recognition stretch occupies residues 277 to 281; it reads TRTAR. 4 residues coordinate Zn(2+): C310, C312, C315, and H347.

Belongs to the queuine tRNA-ribosyltransferase family. As to quaternary structure, heterodimer of a catalytic subunit and an accessory subunit. The cofactor is Zn(2+).

The protein resides in the cytoplasm. Its subcellular location is the nucleus. It catalyses the reaction guanosine(34) in tRNA + queuine = queuosine(34) in tRNA + guanine. Its function is as follows. Catalytic subunit of the queuine tRNA-ribosyltransferase (TGT) that catalyzes the base-exchange of a guanine (G) residue with queuine (Q) at position 34 (anticodon wobble position) in tRNAs with GU(N) anticodons (tRNA-Asp, -Asn, -His and -Tyr), resulting in the hypermodified nucleoside queuosine (7-(((4,5-cis-dihydroxy-2-cyclopenten-1-yl)amino)methyl)-7-deazaguanosine). Catalysis occurs through a double-displacement mechanism. The nucleophile active site attacks the C1' of nucleotide 34 to detach the guanine base from the RNA, forming a covalent enzyme-RNA intermediate. The proton acceptor active site deprotonates the incoming queuine, allowing a nucleophilic attack on the C1' of the ribose to form the product. In Schizosaccharomyces pombe (strain 972 / ATCC 24843) (Fission yeast), this protein is Queuine tRNA-ribosyltransferase catalytic subunit.